A 234-amino-acid polypeptide reads, in one-letter code: Biotin transport ATP-binding protein BioM (234 aa).

The 230-residue stretch at 1-230 (MQAIDIGHVT…YIAAMQALAR (230 aa)) folds into the ABC transporter domain. An ATP-binding site is contributed by 35-42 (GRNGAGKS).

This sequence belongs to the ABC transporter superfamily. Part of a biotin transporter holocomplex composed of BioM, BioN and BioY. BioMN complexes can be readily purified, but not BioMY complexes. Only the BioMNY complex has ATPase activity.

The protein resides in the cell inner membrane. Its function is as follows. Required for biotin uptake under very low (pM) biotin concentrations but not under higher (nM) concentrations. This Rhodobacter capsulatus (strain ATCC BAA-309 / NBRC 16581 / SB1003) protein is Biotin transport ATP-binding protein BioM (bioM).